Here is a 336-residue protein sequence, read N- to C-terminus: N-acetylornithine carbamoyltransferase (336 aa).

Residues 49–52 (SMRT), Trp-77, and Arg-112 each bind carbamoyl phosphate. Glu-144 is a binding site for N(2)-acetyl-L-ornithine. 148-151 (HPCQ) contacts carbamoyl phosphate. Lys-252 and Leu-295 together coordinate N(2)-acetyl-L-ornithine. 294–295 (CL) provides a ligand contact to carbamoyl phosphate. Lys-302 is subject to N6-carboxylysine. Arg-322 provides a ligand contact to carbamoyl phosphate.

Belongs to the aspartate/ornithine carbamoyltransferase superfamily. AOTCase family. In terms of assembly, homotrimer.

The protein localises to the cytoplasm. The catalysed reaction is N(2)-acetyl-L-ornithine + carbamoyl phosphate = N(2)-acetyl-L-citrulline + phosphate + H(+). Its pathway is amino-acid biosynthesis; L-arginine biosynthesis. With respect to regulation, carboxylation at Lys-302 increases the catalytic activity of the enzyme. In terms of biological role, catalyzes the transfer of the carbamoyl group from carbamoyl phosphate to the delta-amino group of N(2)-acetyl-L-ornithine to produce N(2)-acetyl-L-citrulline. This is a step in an alternative arginine biosynthesis pathway. The enzyme has no activity with ornithine. The polypeptide is N-acetylornithine carbamoyltransferase (Xylella fastidiosa (strain Temecula1 / ATCC 700964)).